The chain runs to 300 residues: 4-hydroxy-tetrahydrodipicolinate synthase (300 aa).

T46 lines the pyruvate pocket. The active-site Proton donor/acceptor is Y135. Catalysis depends on K163, which acts as the Schiff-base intermediate with substrate. Residue V205 coordinates pyruvate.

Belongs to the DapA family. In terms of assembly, homotetramer; dimer of dimers.

It localises to the cytoplasm. It carries out the reaction L-aspartate 4-semialdehyde + pyruvate = (2S,4S)-4-hydroxy-2,3,4,5-tetrahydrodipicolinate + H2O + H(+). Its pathway is amino-acid biosynthesis; L-lysine biosynthesis via DAP pathway; (S)-tetrahydrodipicolinate from L-aspartate: step 3/4. Its function is as follows. Catalyzes the condensation of (S)-aspartate-beta-semialdehyde [(S)-ASA] and pyruvate to 4-hydroxy-tetrahydrodipicolinate (HTPA). This is 4-hydroxy-tetrahydrodipicolinate synthase from Koribacter versatilis (strain Ellin345).